The primary structure comprises 255 residues: Accessory gland-specific peptide 26Aa (255 aa).

An N-terminal signal peptide occupies residues 1-18 (MNLILLCSQILLLLFTVA). The interval 86–110 (PINNSKSRKNSSTLPSQILTDKPNQ) is disordered. The segment covering 87-110 (INNSKSRKNSSTLPSQILTDKPNQ) has biased composition (polar residues). 3 N-linked (GlcNAc...) asparagine glycosylation sites follow: N88, N95, and N136. 2 disordered regions span residues 177–196 (NAQNARKSTKSCKKRPSKDI) and 235–255 (NNPATDVPTGKSPSEGNPSTT). Basic residues predominate over residues 183–192 (KSTKSCKKRP). Over residues 245–255 (KSPSEGNPSTT) the composition is skewed to polar residues.

It undergoes several cleavages as it is secreted and it is further processed in the recipient female. As to expression, main cells of the accessory glands of males.

Its subcellular location is the secreted. It is found in the extracellular space. In terms of biological role, this protein is transferred from male to female's hemolymph during mating, affecting egglaying and behavior after mating. The protein is Accessory gland-specific peptide 26Aa (Acp26Aa) of Drosophila sechellia (Fruit fly).